The chain runs to 198 residues: FMN-dependent NADH:quinone oxidoreductase (198 aa).

Residues serine 10, 16–18 (SQS), 94–97 (MYNF), and 138–141 (TRGG) each bind FMN.

Belongs to the azoreductase type 1 family. In terms of assembly, homodimer. FMN is required as a cofactor.

The enzyme catalyses 2 a quinone + NADH + H(+) = 2 a 1,4-benzosemiquinone + NAD(+). It catalyses the reaction N,N-dimethyl-1,4-phenylenediamine + anthranilate + 2 NAD(+) = 2-(4-dimethylaminophenyl)diazenylbenzoate + 2 NADH + 2 H(+). Quinone reductase that provides resistance to thiol-specific stress caused by electrophilic quinones. Its function is as follows. Also exhibits azoreductase activity. Catalyzes the reductive cleavage of the azo bond in aromatic azo compounds to the corresponding amines. This Shewanella baltica (strain OS185) protein is FMN-dependent NADH:quinone oxidoreductase.